Consider the following 80-residue polypeptide: UPF0270 protein VFMJ11_0205 (80 aa).

It belongs to the UPF0270 family.

The chain is UPF0270 protein VFMJ11_0205 from Aliivibrio fischeri (strain MJ11) (Vibrio fischeri).